A 387-amino-acid chain; its full sequence is Fetuin-B (387 aa).

An N-terminal signal peptide occupies residues methionine 1–alanine 18. Cystatin fetuin-B-type domains are found at residues alanine 25–threonine 139 and methionine 150–serine 258. The N-linked (GlcNAc...) asparagine glycan is linked to asparagine 37. Cystine bridges form between cysteine 94/cysteine 105, cysteine 118/cysteine 138, cysteine 152/cysteine 155, cysteine 217/cysteine 225, and cysteine 238/cysteine 257. Asparagine 137 carries N-linked (GlcNAc...) asparagine glycosylation. The tract at residues alanine 264 to serine 306 is disordered. An N-linked (GlcNAc...) asparagine glycan is attached at asparagine 271. A compositionally biased stretch (polar residues) spans alanine 272–threonine 299. Threonine 292 and threonine 295 each carry an O-linked (GalNAc...) threonine glycan. Phosphoserine is present on serine 320. The interval lysine 366–serine 387 is disordered.

The protein belongs to the fetuin family. As to expression, liver and testis.

The protein resides in the secreted. In terms of biological role, protease inhibitor required for egg fertilization. Required to prevent premature zona pellucida hardening before fertilization, probably by inhibiting the protease activity of ASTL, a protease that mediates the cleavage of ZP2 and triggers zona pellucida hardening. The sequence is that of Fetuin-B (FETUB) from Bos taurus (Bovine).